The chain runs to 209 residues: Ion-translocating oxidoreductase complex subunit G (209 aa).

The chain crosses the membrane as a helical span at residues 9-29 (GLILAVFACVSTGLVALTYAL). Threonine 175 is subject to FMN phosphoryl threonine.

It belongs to the RnfG family. As to quaternary structure, the complex is composed of six subunits: RnfA, RnfB, RnfC, RnfD, RnfE and RnfG. FMN is required as a cofactor.

The protein localises to the cell inner membrane. Part of a membrane-bound complex that couples electron transfer with translocation of ions across the membrane. This is Ion-translocating oxidoreductase complex subunit G from Vibrio cholerae serotype O1 (strain ATCC 39315 / El Tor Inaba N16961).